We begin with the raw amino-acid sequence, 84 residues long: Cell division topological specificity factor (84 aa).

The protein belongs to the MinE family.

In terms of biological role, prevents the cell division inhibition by proteins MinC and MinD at internal division sites while permitting inhibition at polar sites. This ensures cell division at the proper site by restricting the formation of a division septum at the midpoint of the long axis of the cell. The polypeptide is Cell division topological specificity factor (Pseudomonas syringae pv. syringae (strain B728a)).